A 198-amino-acid polypeptide reads, in one-letter code: Autophagy-related protein 33 (198 aa).

3 helical membrane-spanning segments follow: residues 17 to 37 (VSLGLLTGVSYSISSLALPAL), 60 to 80 (PVLALTSLASAPFLISFFLAP), and 86 to 106 (PYLLYTAILATLSSVAPILIP). The disordered stretch occupies residues 111 to 147 (APRRTASSAPRKSSRAKMEASYEVLGDAHSEPASDED). Positions 112-121 (PRRTASSAPR) are enriched in low complexity. Over residues 126–142 (AKMEASYEVLGDAHSEP) the composition is skewed to basic and acidic residues. The chain crosses the membrane as a helical span at residues 171–191 (TAISALGFAMAVVGIWGDGAP).

It belongs to the ATG33 family.

It localises to the mitochondrion membrane. Functionally, involved in the selective degradation of mitochondria via autophagy during starvation and at post-log phase. Autophagy is required for proper vegetative growth, asexual/sexual reproduction, and full virulence. Autophagy is particularly involved in the biosynthesis of deoxynivalenol (DON), an important virulence determinant. This chain is Autophagy-related protein 33, found in Gibberella zeae (strain ATCC MYA-4620 / CBS 123657 / FGSC 9075 / NRRL 31084 / PH-1) (Wheat head blight fungus).